The chain runs to 701 residues: Glycine--tRNA ligase beta subunit (701 aa).

It belongs to the class-II aminoacyl-tRNA synthetase family. In terms of assembly, tetramer of two alpha and two beta subunits.

The protein localises to the cytoplasm. The enzyme catalyses tRNA(Gly) + glycine + ATP = glycyl-tRNA(Gly) + AMP + diphosphate. The sequence is that of Glycine--tRNA ligase beta subunit from Anaeromyxobacter dehalogenans (strain 2CP-1 / ATCC BAA-258).